The primary structure comprises 271 residues: Putative pyruvate, phosphate dikinase regulatory protein (271 aa).

Position 153-160 (153-160 (GVSRTSKT)) interacts with ADP.

The protein belongs to the pyruvate, phosphate/water dikinase regulatory protein family. PDRP subfamily.

The catalysed reaction is N(tele)-phospho-L-histidyl/L-threonyl-[pyruvate, phosphate dikinase] + ADP = N(tele)-phospho-L-histidyl/O-phospho-L-threonyl-[pyruvate, phosphate dikinase] + AMP + H(+). The enzyme catalyses N(tele)-phospho-L-histidyl/O-phospho-L-threonyl-[pyruvate, phosphate dikinase] + phosphate + H(+) = N(tele)-phospho-L-histidyl/L-threonyl-[pyruvate, phosphate dikinase] + diphosphate. Functionally, bifunctional serine/threonine kinase and phosphorylase involved in the regulation of the pyruvate, phosphate dikinase (PPDK) by catalyzing its phosphorylation/dephosphorylation. The chain is Putative pyruvate, phosphate dikinase regulatory protein from Shouchella clausii (strain KSM-K16) (Alkalihalobacillus clausii).